The following is a 378-amino-acid chain: MTIGNFRPATVLIDETAILHNIQHEVARLKKQTQLFAVVKADAYGHGMLRVARVAKAAGATGFCVAILDEALGLRKADYSEPVLVLGIVPSQYAAIAAAQTISLPVSSTEWLEQALPVLEAQPELPPLRIHLALDTGMGRIGFTEDQALKTAVAFVEAHPKQFVIEGVFTHFATADAPDDTYFKQQVNKFNHLVNLLPSRPRYVHVSNSATSLWHAACNGNMIRYGVAIYGLNPSGDAIPTTPFPLEPALSLESELTYCKQVHAGDGISYGVTYRAKGDEFIGTVPIGYADGWLRRLQGFHVLVDGQYCEIVGRICMDQFMIRLPKAYPAGTKVVLVGQSGDQEITLLDVAKYSKTIHYEIACNLTPRLKRQSVNPVD.

The active-site Proton acceptor; specific for D-alanine is the K40. An N6-(pyridoxal phosphate)lysine modification is found at K40. R140 is a binding site for substrate. Y270 (proton acceptor; specific for L-alanine) is an active-site residue. A substrate-binding site is contributed by M317.

The protein belongs to the alanine racemase family. It depends on pyridoxal 5'-phosphate as a cofactor.

It carries out the reaction L-alanine = D-alanine. It participates in amino-acid biosynthesis; D-alanine biosynthesis; D-alanine from L-alanine: step 1/1. Functionally, catalyzes the interconversion of L-alanine and D-alanine. May also act on other amino acids. This Lacticaseibacillus casei (strain BL23) (Lactobacillus casei) protein is Alanine racemase (alr).